The primary structure comprises 77 residues: DNA-directed RNA polymerase subunit epsilon (77 aa).

Belongs to the RNA polymerase subunit epsilon family. As to quaternary structure, RNAP is composed of a core of 2 alpha, a beta and a beta' subunit. The core is associated with a delta subunit, and at least one of epsilon or omega. When a sigma factor is associated with the core the holoenzyme is formed, which can initiate transcription.

It carries out the reaction RNA(n) + a ribonucleoside 5'-triphosphate = RNA(n+1) + diphosphate. A non-essential component of RNA polymerase (RNAP). The protein is DNA-directed RNA polymerase subunit epsilon of Streptococcus pneumoniae (strain Hungary19A-6).